The sequence spans 224 residues: Cytidylate kinase (224 aa).

ATP is bound at residue 13–21 (GPSASGKGT).

The protein belongs to the cytidylate kinase family. Type 1 subfamily.

The protein resides in the cytoplasm. The catalysed reaction is CMP + ATP = CDP + ADP. The enzyme catalyses dCMP + ATP = dCDP + ADP. The polypeptide is Cytidylate kinase (Nitrosomonas eutropha (strain DSM 101675 / C91 / Nm57)).